The chain runs to 529 residues: GMP synthase [glutamine-hydrolyzing] (529 aa).

Residues 3 to 204 (TVAIVDFGSQ…FLKIAGCTRD (202 aa)) form the Glutamine amidotransferase type-1 domain. Catalysis depends on Cys-87, which acts as the Nucleophile. Catalysis depends on residues His-179 and Glu-181. A GMPS ATP-PPase domain is found at 205 to 395 (WTMGSFLHTQ…LGLPSAILDR (191 aa)). 232–238 (SGGVDSS) provides a ligand contact to ATP.

In terms of assembly, homodimer.

The catalysed reaction is XMP + L-glutamine + ATP + H2O = GMP + L-glutamate + AMP + diphosphate + 2 H(+). It functions in the pathway purine metabolism; GMP biosynthesis; GMP from XMP (L-Gln route): step 1/1. Its function is as follows. Catalyzes the synthesis of GMP from XMP. In Anaplasma marginale (strain St. Maries), this protein is GMP synthase [glutamine-hydrolyzing].